Reading from the N-terminus, the 426-residue chain is Serine--tRNA ligase (426 aa).

Position 233–235 (233–235 (TAE)) interacts with L-serine. 264–266 (RSE) provides a ligand contact to ATP. E287 contacts L-serine. 351 to 354 (EISS) serves as a coordination point for ATP. An L-serine-binding site is contributed by S387.

This sequence belongs to the class-II aminoacyl-tRNA synthetase family. Type-1 seryl-tRNA synthetase subfamily. Homodimer. The tRNA molecule binds across the dimer.

The protein resides in the cytoplasm. The catalysed reaction is tRNA(Ser) + L-serine + ATP = L-seryl-tRNA(Ser) + AMP + diphosphate + H(+). It catalyses the reaction tRNA(Sec) + L-serine + ATP = L-seryl-tRNA(Sec) + AMP + diphosphate + H(+). The protein operates within aminoacyl-tRNA biosynthesis; selenocysteinyl-tRNA(Sec) biosynthesis; L-seryl-tRNA(Sec) from L-serine and tRNA(Sec): step 1/1. Catalyzes the attachment of serine to tRNA(Ser). Is also able to aminoacylate tRNA(Sec) with serine, to form the misacylated tRNA L-seryl-tRNA(Sec), which will be further converted into selenocysteinyl-tRNA(Sec). The sequence is that of Serine--tRNA ligase from Azotobacter vinelandii (strain DJ / ATCC BAA-1303).